A 427-amino-acid chain; its full sequence is Trigger factor (427 aa).

The region spanning 163–248 (GDIVVIDFAG…LKEIKRKELA (86 aa)) is the PPIase FKBP-type domain.

It belongs to the FKBP-type PPIase family. Tig subfamily.

It is found in the cytoplasm. The enzyme catalyses [protein]-peptidylproline (omega=180) = [protein]-peptidylproline (omega=0). Involved in protein export. Acts as a chaperone by maintaining the newly synthesized protein in an open conformation. Functions as a peptidyl-prolyl cis-trans isomerase. The sequence is that of Trigger factor from Carboxydothermus hydrogenoformans (strain ATCC BAA-161 / DSM 6008 / Z-2901).